A 507-amino-acid chain; its full sequence is Probable cytosol aminopeptidase (507 aa).

Residues lysine 275 and aspartate 280 each coordinate Mn(2+). Lysine 287 is a catalytic residue. Residues aspartate 298, aspartate 357, and glutamate 359 each coordinate Mn(2+). Arginine 361 is a catalytic residue.

The protein belongs to the peptidase M17 family. The cofactor is Mn(2+).

It is found in the cytoplasm. It carries out the reaction Release of an N-terminal amino acid, Xaa-|-Yaa-, in which Xaa is preferably Leu, but may be other amino acids including Pro although not Arg or Lys, and Yaa may be Pro. Amino acid amides and methyl esters are also readily hydrolyzed, but rates on arylamides are exceedingly low.. The catalysed reaction is Release of an N-terminal amino acid, preferentially leucine, but not glutamic or aspartic acids.. Presumably involved in the processing and regular turnover of intracellular proteins. Catalyzes the removal of unsubstituted N-terminal amino acids from various peptides. In Acidobacterium capsulatum (strain ATCC 51196 / DSM 11244 / BCRC 80197 / JCM 7670 / NBRC 15755 / NCIMB 13165 / 161), this protein is Probable cytosol aminopeptidase.